The primary structure comprises 272 residues: Bis(5'-nucleosyl)-tetraphosphatase, symmetrical (272 aa).

The protein belongs to the Ap4A hydrolase family.

It carries out the reaction P(1),P(4)-bis(5'-adenosyl) tetraphosphate + H2O = 2 ADP + 2 H(+). Its function is as follows. Hydrolyzes diadenosine 5',5'''-P1,P4-tetraphosphate to yield ADP. This is Bis(5'-nucleosyl)-tetraphosphatase, symmetrical from Wigglesworthia glossinidia brevipalpis.